The following is a 487-amino-acid chain: MAYSKITLLAALAAIAYAQTQAQINELNVVLDDVKTNIADYITLSYTPNSGFSLDQMPAGIMDIAAQLVANPSDDSYTTLYSEVDFSAVEHMLTMVPWYSSRLLPELEAMDASLTTSSSAATSSSEVASSSIASSTSSSVAPSSSEVVSSSVAPSSSEVVSSSVAPSSSEVVSSSVASSSSEVASSSVAPSSSEVVSSSVASSSSEVASSSVAPSSSEVVSSSVAPSSSEVVSSSVASSSSEVASSSVAPSSSEVVSSSVASSTSEATSSSAVTSSSAVSSSTESVSSSSVSSSSAVSSSEAVSSSPVSSVVSSSAGPASSSVAPYNSTIASSSSTAQTSISTIAPYNSTTTTTPASSASSVIISTRNGTTVTETDNTLVTKETTVCDYSSTSAVPASTTGYNNSTKVSTATICSTCKEGTSTATDFSTLKTTVTVCDSACQAKKSATVVSVQSKTTGIVEQTENGAAKAVIGMGAGALAAVAAMLL.

Positions 1-22 (MAYSKITLLAALAAIAYAQTQA) are cleaved as a signal peptide. Tandem repeats lie at residues 137–148 (SSSVAPSSSEVV), 149–160 (SSSVAPSSSEVV), 161–172 (SSSVAPSSSEVV), 173–184 (SSSVASSSSEVA), 185–196 (SSSVAPSSSEVV), 197–208 (SSSVASSSSEVA), 209–220 (SSSVAPSSSEVV), 221–232 (SSSVAPSSSEVV), 233–244 (SSSVASSSSEVA), 245–256 (SSSVAPSSSEVV), and 257–268 (SSSVASSTSEAT). Residues 137–268 (SSSVAPSSSE…SVASSTSEAT (132 aa)) are 11 X 12 AA approximate tandem repeats, Ser-rich. Residues 206–299 (EVASSSVAPS…SVSSSSAVSS (94 aa)) are disordered. N327, N348, N368, N403, and N404 each carry an N-linked (GlcNAc...) asparagine glycan. Residue N465 is the site of GPI-anchor amidated asparagine attachment. A propeptide spans 466-487 (GAAKAVIGMGAGALAAVAAMLL) (removed in mature form).

It belongs to the SRP1/TIP1 family. In terms of processing, the GPI-anchor is attached to the protein in the endoplasmic reticulum and serves to target the protein to the cell surface. There, the glucosamine-inositol phospholipid moiety is cleaved off and the GPI-modified mannoprotein is covalently attached via its lipidless GPI glycan remnant to the 1,6-beta-glucan of the outer cell wall layer.

Its subcellular location is the secreted. It is found in the cell wall. It localises to the membrane. In terms of biological role, component of the cell wall. Required for anaerobic growth. In Saccharomyces cerevisiae (strain ATCC 204508 / S288c) (Baker's yeast), this protein is Cell wall protein TIR4 (TIR4).